Consider the following 124-residue polypeptide: Large ribosomal subunit protein uL22 (124 aa).

It belongs to the universal ribosomal protein uL22 family. In terms of assembly, part of the 50S ribosomal subunit.

Functionally, this protein binds specifically to 23S rRNA; its binding is stimulated by other ribosomal proteins, e.g. L4, L17, and L20. It is important during the early stages of 50S assembly. It makes multiple contacts with different domains of the 23S rRNA in the assembled 50S subunit and ribosome. The globular domain of the protein is located near the polypeptide exit tunnel on the outside of the subunit, while an extended beta-hairpin is found that lines the wall of the exit tunnel in the center of the 70S ribosome. This is Large ribosomal subunit protein uL22 from Synechococcus sp. (strain JA-2-3B'a(2-13)) (Cyanobacteria bacterium Yellowstone B-Prime).